Reading from the N-terminus, the 202-residue chain is Pyridoxal 5'-phosphate synthase subunit PdxT (202 aa).

49 to 51 is an L-glutamine binding site; it reads GES. Cysteine 81 serves as the catalytic Nucleophile. L-glutamine-binding positions include arginine 110 and 139–140; that span reads IR. Residues histidine 182 and glutamate 184 each act as charge relay system in the active site.

This sequence belongs to the glutaminase PdxT/SNO family. In terms of assembly, in the presence of PdxS, forms a dodecamer of heterodimers. Only shows activity in the heterodimer.

The enzyme catalyses aldehydo-D-ribose 5-phosphate + D-glyceraldehyde 3-phosphate + L-glutamine = pyridoxal 5'-phosphate + L-glutamate + phosphate + 3 H2O + H(+). It carries out the reaction L-glutamine + H2O = L-glutamate + NH4(+). Its pathway is cofactor biosynthesis; pyridoxal 5'-phosphate biosynthesis. Catalyzes the hydrolysis of glutamine to glutamate and ammonia as part of the biosynthesis of pyridoxal 5'-phosphate. The resulting ammonia molecule is channeled to the active site of PdxS. The sequence is that of Pyridoxal 5'-phosphate synthase subunit PdxT from Rhodococcus opacus (strain B4).